Consider the following 547-residue polypeptide: Chaperonin GroEL (547 aa).

ATP is bound by residues 30–33 (TLGP), lysine 51, 87–91 (DGTTT), glycine 415, and aspartate 495. The segment at 526–547 (QDATPTASPDMGGMGGMGGGMM) is disordered. Over residues 537 to 547 (GGMGGMGGGMM) the composition is skewed to gly residues.

It belongs to the chaperonin (HSP60) family. In terms of assembly, forms a cylinder of 14 subunits composed of two heptameric rings stacked back-to-back. Interacts with the co-chaperonin GroES.

It is found in the cytoplasm. The catalysed reaction is ATP + H2O + a folded polypeptide = ADP + phosphate + an unfolded polypeptide.. Together with its co-chaperonin GroES, plays an essential role in assisting protein folding. The GroEL-GroES system forms a nano-cage that allows encapsulation of the non-native substrate proteins and provides a physical environment optimized to promote and accelerate protein folding. The polypeptide is Chaperonin GroEL (Vesicomyosocius okutanii subsp. Calyptogena okutanii (strain HA)).